Reading from the N-terminus, the 366-residue chain is MASYSQFLTKAQEDELRSIANAIVTPGKGILAADESTGSMDKRLNSIGLENTEENRRKYRQLLFTAGADLNKYISGVIMFHETFYQKTDDGKPFTALLQEQGIIPGIKVDKGVVPMAGTIGEGTTQGLDDLNARCAQYKKDGAQFAKWRCVHKISSTTPSVTALKEIASNLGSRYASICQQNGLVPIVEPEILPDGEHCLARGQKITETVLSYVYHALNEHHVFLEGTLLKPNMVTSGQSFTGEKPSNADIGLATVTALQRGVPSAVPGVVFLSGGQSEEDATLNLNAINQVSGKKPWALTFSYGRALQASCLAKWAGKDENIAAAQEVLLHRAQVNSLASVGKYTGDASADAAASQSLFVANHSY.

R56 and K147 together coordinate substrate. E189 (proton acceptor) is an active-site residue. The active-site Schiff-base intermediate with dihydroxyacetone-P is the K231.

Belongs to the class I fructose-bisphosphate aldolase family. Ubiquitous.

It catalyses the reaction beta-D-fructose 1,6-bisphosphate = D-glyceraldehyde 3-phosphate + dihydroxyacetone phosphate. The protein operates within carbohydrate degradation; glycolysis; D-glyceraldehyde 3-phosphate and glycerone phosphate from D-glucose: step 4/4. May be involved in the metabolism of fructose-bisphosphate (beta-D-fructose 1,6-bisphosphate) and of fructose 1-phosphate. In Caenorhabditis elegans, this protein is Fructose-bisphosphate aldolase 1 (aldo-1).